Reading from the N-terminus, the 260-residue chain is MTSLKLLKEKAPLVICITNDVVKNFTANGLVALGASPAMSEFPADLEDLLKYAGGLLINIGTLTDENWKLYQAALKIAEKYNVPVVLDPVACGAGEYRKKVADDLINNYKLAAIRGNAGEIASLVGIDVASKGVDSAGVDNIDEIALAANEKFNIPIVVTGEVDAIAVNGEVVTIHNGSAMMPKVIGTGCLLGAVVASFIGLEKGQELKSLETAMLVYNIAGEMAEKRPNGHLPGTFKVEFINALYEITDEDVKEFKRVK.

Met39 contacts substrate. Residues Arg115 and Thr160 each coordinate ATP. Gly187 is a substrate binding site.

This sequence belongs to the Thz kinase family. Mg(2+) is required as a cofactor.

It carries out the reaction 5-(2-hydroxyethyl)-4-methylthiazole + ATP = 4-methyl-5-(2-phosphooxyethyl)-thiazole + ADP + H(+). Its pathway is cofactor biosynthesis; thiamine diphosphate biosynthesis; 4-methyl-5-(2-phosphoethyl)-thiazole from 5-(2-hydroxyethyl)-4-methylthiazole: step 1/1. Catalyzes the phosphorylation of the hydroxyl group of 4-methyl-5-beta-hydroxyethylthiazole (THZ). The protein is Hydroxyethylthiazole kinase 1 of Streptococcus pneumoniae (strain ATCC 700669 / Spain 23F-1).